The chain runs to 938 residues: Protocadherin gamma-C4 (938 aa).

The signal sequence occupies residues 1–29 (MLRKVRSWTEIWRWATLLFLFYHLGYVCG). 6 Cadherin domains span residues 30 to 133 (QIRY…APRF), 134 to 242 (PRQQ…APAF), 243 to 350 (QQSS…APYI), 351 to 455 (TVTS…PPSF), 456 to 565 (FQRS…APAV), and 572 to 676 (PGSL…VPDL). Residues 30 to 692 (QIRYPVPEES…REGESRLTLY (663 aa)) lie on the Extracellular side of the membrane. Residues Asn265, Asn276, and Asn444 are each glycosylated (N-linked (GlcNAc...) asparagine). Residues 693 to 713 (LAVSLVAICFVSFGSFVALLS) form a helical membrane-spanning segment. The Cytoplasmic portion of the chain corresponds to 714–938 (KCLRGAACGV…KKKSGKKEKK (225 aa)). 2 disordered regions span residues 791–847 (PSAP…WPNN) and 908–938 (ATLTNAAGKRDGKAPAGGNGNKKKSGKKEKK). The segment covering 822–847 (WRFSQAQRPGTSGSQNGDDTGTWPNN) has biased composition (polar residues). Positions 928 to 938 (NKKKSGKKEKK) are enriched in basic residues.

It is found in the cell membrane. Potential calcium-dependent cell-adhesion protein. May be involved in the establishment and maintenance of specific neuronal connections in the brain. The protein is Protocadherin gamma-C4 (PCDHGC4) of Homo sapiens (Human).